The primary structure comprises 233 residues: Metallo-beta-lactamase domain-containing protein 1 (233 aa).

The Zn(2+) site is built by H96, H98, D100, H101, H152, D174, and H213.

This sequence belongs to the metallo-beta-lactamase superfamily. Glyoxalase II family. In terms of assembly, homodimer. Zn(2+) is required as a cofactor.

It localises to the cytoplasm. The protein localises to the cytosol. The protein resides in the nucleus. The catalysed reaction is a ribonucleotidyl-ribonucleotide-RNA + H2O = a 3'-end ribonucleotide-RNA + a 5'-end 5'-phospho-ribonucleoside-RNA + H(+). Functionally, endoribonuclease that catalyzes the hydrolysis of histone-coding pre-mRNA 3'-end. Involved in histone pre-mRNA processing during the S-phase of the cell cycle, which is required for entering/progressing through S-phase. Cleaves histone pre-mRNA at a major and a minor cleavage site after the 5'-ACCCA-3' and the 5'-ACCCACA-3' sequence, respectively, and located downstream of the stem-loop. May require the presence of the HDE element located at the histone pre-RNA 3'-end to avoid non-specific cleavage. In Xenopus laevis (African clawed frog), this protein is Metallo-beta-lactamase domain-containing protein 1 (mblac1).